The following is a 401-amino-acid chain: Adaptive-response sensory kinase SasA (401 aa).

The 226-residue stretch at Met175–Pro400 folds into the Histidine kinase domain. His178 is subject to Phosphohistidine; by autocatalysis.

As to quaternary structure, homooligomerizes. Interacts with KaiC. Participates in the KaiABC clock complex, whose core is composed of a KaiC homohexamer, 6 KaiB and up to 6 KaiA dimers. SasA and KaiB(fs) compete to bind to KaiC.

The catalysed reaction is ATP + protein L-histidine = ADP + protein N-phospho-L-histidine.. Functionally, member of the two-component regulatory system SasA/RpaA involved in genome-wide circadian gene expression. One of several clock output pathways. Participates in the Kai clock protein complex, the main circadian regulator in cyanobacteria, via its interaction with KaiC. KaiC enhances the autophosphorylation activity of SasA, which then transfers its phosphate group to RpaA to activate it. In addition to its output function, recruits fold-shifted KaiB (KaiB(fs)) to KaiC to cooperatively form the KaiB(6):KaiC(6) complex (independent of SasA kinase activity). Required for robustness of the circadian rhythm of gene expression and is involved in clock output, also required for adaptation to light/dark cycles. This is Adaptive-response sensory kinase SasA from Trichormus variabilis (strain ATCC 29413 / PCC 7937) (Anabaena variabilis).